A 336-amino-acid chain; its full sequence is Nicotinate-nucleotide--dimethylbenzimidazole phosphoribosyltransferase (336 aa).

Glu-304 serves as the catalytic Proton acceptor.

Belongs to the CobT family.

It carries out the reaction 5,6-dimethylbenzimidazole + nicotinate beta-D-ribonucleotide = alpha-ribazole 5'-phosphate + nicotinate + H(+). It participates in nucleoside biosynthesis; alpha-ribazole biosynthesis; alpha-ribazole from 5,6-dimethylbenzimidazole: step 1/2. Its function is as follows. Catalyzes the synthesis of alpha-ribazole-5'-phosphate from nicotinate mononucleotide (NAMN) and 5,6-dimethylbenzimidazole (DMB). The chain is Nicotinate-nucleotide--dimethylbenzimidazole phosphoribosyltransferase from Mesorhizobium japonicum (strain LMG 29417 / CECT 9101 / MAFF 303099) (Mesorhizobium loti (strain MAFF 303099)).